The sequence spans 124 residues: Fluoride-specific ion channel FluC 1 (124 aa).

A run of 4 helical transmembrane segments spans residues 1 to 21, 30 to 50, 64 to 84, and 93 to 113; these read MCAV…ALGA, LWPG…LLGY, FLGV…VDAV, and LYVV…MLAG. Na(+) is bound by residues G71 and T74.

This sequence belongs to the fluoride channel Fluc/FEX (TC 1.A.43) family.

Its subcellular location is the cell membrane. It carries out the reaction fluoride(in) = fluoride(out). With respect to regulation, na(+) is not transported, but it plays an essential structural role and its presence is essential for fluoride channel function. Functionally, fluoride-specific ion channel. Important for reducing fluoride concentration in the cell, thus reducing its toxicity. The sequence is that of Fluoride-specific ion channel FluC 1 from Rhodococcus jostii (strain RHA1).